The chain runs to 289 residues: ATP phosphoribosyltransferase (289 aa).

This sequence belongs to the ATP phosphoribosyltransferase family. Long subfamily. It depends on Mg(2+) as a cofactor.

The protein localises to the cytoplasm. It catalyses the reaction 1-(5-phospho-beta-D-ribosyl)-ATP + diphosphate = 5-phospho-alpha-D-ribose 1-diphosphate + ATP. It participates in amino-acid biosynthesis; L-histidine biosynthesis; L-histidine from 5-phospho-alpha-D-ribose 1-diphosphate: step 1/9. With respect to regulation, feedback inhibited by histidine. Functionally, catalyzes the condensation of ATP and 5-phosphoribose 1-diphosphate to form N'-(5'-phosphoribosyl)-ATP (PR-ATP). Has a crucial role in the pathway because the rate of histidine biosynthesis seems to be controlled primarily by regulation of HisG enzymatic activity. The polypeptide is ATP phosphoribosyltransferase (Methanosarcina mazei (strain ATCC BAA-159 / DSM 3647 / Goe1 / Go1 / JCM 11833 / OCM 88) (Methanosarcina frisia)).